The sequence spans 411 residues: Putative competence-damage inducible protein (411 aa).

The protein belongs to the CinA family.

This Caldicellulosiruptor saccharolyticus (strain ATCC 43494 / DSM 8903 / Tp8T 6331) protein is Putative competence-damage inducible protein.